Consider the following 336-residue polypeptide: MGGDWQELAQAAVIGLLFAFLVAKLISTVIAFKEDNLRITRSTPTSPSAADTPAAPAPPPASLDGGHGDTSDGSGSDSDSDWEGVESTELDEEFSAASAFVAASAASGTSVPEQAQLQLYGLYKIATEGPCTAPQPSALKLKARAKWNAWHKLGAMPTEEAMQKYITVVDELFPNWSMGSSTKRKDEDTTVSASSSKGPMGPVFSSLMYEEEDQGNDSELGDIHVSAREGAIDDIAKHLAAGVEVNMRDSEGRTPLHWAVDRGHLNSVEILVNANADVNAQDNEGQTALHYAVLCEREDIAELLVKHHADVQIKDEDGNTVRELCPSSWSFMNLAN.

Residues 12–32 traverse the membrane as a helical; Signal-anchor segment; the sequence is AVIGLLFAFLVAKLISTVIAF. Residues 40–88 are disordered; that stretch reads TRSTPTSPSAADTPAAPAPPPASLDGGHGDTSDGSGSDSDSDWEGVEST. Residues 42 to 54 show a composition bias toward low complexity; that stretch reads STPTSPSAADTPA. Positions 78–88 are enriched in acidic residues; it reads SDSDWEGVEST. An ACB domain is found at 90–178; it reads LDEEFSAASA…VDELFPNWSM (89 aa). An acyl-CoA-binding positions include 120-124, K142, K146, and Y165; that span reads YGLYK. N175 is a glycosylation site (N-linked (GlcNAc...) asparagine). Residues 179 to 202 are disordered; it reads GSSTKRKDEDTTVSASSSKGPMGP. N216 carries an N-linked (GlcNAc...) asparagine glycan. ANK repeat units lie at residues 251–280 and 284–313; these read EGRT…DVNA and EGQT…DVQI.

This sequence belongs to the ACBP family. In terms of tissue distribution, highly expressed in leaves. Expressed at low levels in roots and seeds.

The protein localises to the endoplasmic reticulum membrane. In terms of biological role, binds medium- and long-chain acyl-CoA esters with high affinity. Can interact in vitro with palmitoyl-CoA, linoleoyl-CoA and linolenoyl-CoA. Binds phosphatidic acid (PA) and phosphatidylcholine (PC) in vitro. May play a role in the biosynthesis of phospholipids. This is Acyl-CoA-binding domain-containing protein 4 from Oryza sativa subsp. japonica (Rice).